The chain runs to 400 residues: Enoyl-[acyl-carrier-protein] reductase [NADH] (400 aa).

NAD(+)-binding positions include 48–53, 74–75, 111–112, and 139–140; these read GSSSGY, FE, DA, and LA. Substrate is bound at residue Tyr225. The active-site Proton donor is the Tyr235. NAD(+) is bound by residues Lys244 and 273 to 275; that span reads VVT.

It belongs to the TER reductase family. Monomer.

It carries out the reaction a 2,3-saturated acyl-[ACP] + NAD(+) = a (2E)-enoyl-[ACP] + NADH + H(+). It functions in the pathway lipid metabolism; fatty acid biosynthesis. Functionally, involved in the final reduction of the elongation cycle of fatty acid synthesis (FAS II). Catalyzes the reduction of a carbon-carbon double bond in an enoyl moiety that is covalently linked to an acyl carrier protein (ACP). The sequence is that of Enoyl-[acyl-carrier-protein] reductase [NADH] from Shewanella frigidimarina (strain NCIMB 400).